The chain runs to 342 residues: Probable RNA methyltransferase PST_2231 (342 aa).

The active-site Proton acceptor is Glu91. The Radical SAM core domain maps to Leu94–Asp320. The cysteines at positions 101 and 325 are disulfide-linked. [4Fe-4S] cluster is bound by residues Cys108, Cys112, and Cys115. S-adenosyl-L-methionine is bound by residues Gly153–Glu154, Ser183, Ser206–His208, and Asn282. Cys325 (S-methylcysteine intermediate) is an active-site residue.

This sequence belongs to the radical SAM superfamily. RlmN family. The cofactor is [4Fe-4S] cluster.

The protein localises to the cytoplasm. The polypeptide is Probable RNA methyltransferase PST_2231 (Stutzerimonas stutzeri (strain A1501) (Pseudomonas stutzeri)).